Consider the following 290-residue polypeptide: Glycine--tRNA ligase alpha subunit (290 aa).

This sequence belongs to the class-II aminoacyl-tRNA synthetase family. As to quaternary structure, tetramer of two alpha and two beta subunits.

Its subcellular location is the cytoplasm. The catalysed reaction is tRNA(Gly) + glycine + ATP = glycyl-tRNA(Gly) + AMP + diphosphate. The chain is Glycine--tRNA ligase alpha subunit from Fusobacterium nucleatum subsp. nucleatum (strain ATCC 25586 / DSM 15643 / BCRC 10681 / CIP 101130 / JCM 8532 / KCTC 2640 / LMG 13131 / VPI 4355).